The following is a 320-amino-acid chain: Aspartate carbamoyltransferase catalytic subunit (320 aa).

Carbamoyl phosphate-binding residues include R65 and T66. K93 is a binding site for L-aspartate. Positions 115, 143, and 146 each coordinate carbamoyl phosphate. Residues R176 and R230 each contribute to the L-aspartate site. Carbamoyl phosphate-binding residues include G271 and P272.

This sequence belongs to the aspartate/ornithine carbamoyltransferase superfamily. ATCase family. In terms of assembly, heterododecamer (2C3:3R2) of six catalytic PyrB chains organized as two trimers (C3), and six regulatory PyrI chains organized as three dimers (R2).

It catalyses the reaction carbamoyl phosphate + L-aspartate = N-carbamoyl-L-aspartate + phosphate + H(+). It participates in pyrimidine metabolism; UMP biosynthesis via de novo pathway; (S)-dihydroorotate from bicarbonate: step 2/3. Catalyzes the condensation of carbamoyl phosphate and aspartate to form carbamoyl aspartate and inorganic phosphate, the committed step in the de novo pyrimidine nucleotide biosynthesis pathway. The chain is Aspartate carbamoyltransferase catalytic subunit from Maricaulis maris (strain MCS10) (Caulobacter maris).